A 719-amino-acid chain; its full sequence is Phosphoribosylformylglycinamidine synthase subunit PurL (719 aa).

Residue His47 is part of the active site. 2 residues coordinate ATP: Tyr50 and Lys89. Glu91 contributes to the Mg(2+) binding site. Substrate-binding positions include 92 to 95 (SHNH) and Arg114. His93 (proton acceptor) is an active-site residue. Asp115 lines the Mg(2+) pocket. Gln238 contributes to the substrate binding site. Position 266 (Asp266) interacts with Mg(2+). 310-312 (ESQ) contributes to the substrate binding site. ATP contacts are provided by Asp488 and Gly525. Asn526 serves as a coordination point for Mg(2+). Ser528 is a substrate binding site.

This sequence belongs to the FGAMS family. Monomer. Part of the FGAM synthase complex composed of 1 PurL, 1 PurQ and 2 PurS subunits.

The protein resides in the cytoplasm. It catalyses the reaction N(2)-formyl-N(1)-(5-phospho-beta-D-ribosyl)glycinamide + L-glutamine + ATP + H2O = 2-formamido-N(1)-(5-O-phospho-beta-D-ribosyl)acetamidine + L-glutamate + ADP + phosphate + H(+). It functions in the pathway purine metabolism; IMP biosynthesis via de novo pathway; 5-amino-1-(5-phospho-D-ribosyl)imidazole from N(2)-formyl-N(1)-(5-phospho-D-ribosyl)glycinamide: step 1/2. Functionally, part of the phosphoribosylformylglycinamidine synthase complex involved in the purines biosynthetic pathway. Catalyzes the ATP-dependent conversion of formylglycinamide ribonucleotide (FGAR) and glutamine to yield formylglycinamidine ribonucleotide (FGAM) and glutamate. The FGAM synthase complex is composed of three subunits. PurQ produces an ammonia molecule by converting glutamine to glutamate. PurL transfers the ammonia molecule to FGAR to form FGAM in an ATP-dependent manner. PurS interacts with PurQ and PurL and is thought to assist in the transfer of the ammonia molecule from PurQ to PurL. In Ruegeria pomeroyi (strain ATCC 700808 / DSM 15171 / DSS-3) (Silicibacter pomeroyi), this protein is Phosphoribosylformylglycinamidine synthase subunit PurL.